Reading from the N-terminus, the 229-residue chain is Uracil-DNA glycosylase (229 aa).

The active-site Proton acceptor is the Asp64.

Belongs to the uracil-DNA glycosylase (UDG) superfamily. UNG family.

It is found in the cytoplasm. It catalyses the reaction Hydrolyzes single-stranded DNA or mismatched double-stranded DNA and polynucleotides, releasing free uracil.. Excises uracil residues from the DNA which can arise as a result of misincorporation of dUMP residues by DNA polymerase or due to deamination of cytosine. The polypeptide is Uracil-DNA glycosylase (Salmonella choleraesuis (strain SC-B67)).